We begin with the raw amino-acid sequence, 347 residues long: S-adenosylmethionine:tRNA ribosyltransferase-isomerase (347 aa).

This sequence belongs to the QueA family. In terms of assembly, monomer.

The protein resides in the cytoplasm. The catalysed reaction is 7-aminomethyl-7-carbaguanosine(34) in tRNA + S-adenosyl-L-methionine = epoxyqueuosine(34) in tRNA + adenine + L-methionine + 2 H(+). It functions in the pathway tRNA modification; tRNA-queuosine biosynthesis. Transfers and isomerizes the ribose moiety from AdoMet to the 7-aminomethyl group of 7-deazaguanine (preQ1-tRNA) to give epoxyqueuosine (oQ-tRNA). The sequence is that of S-adenosylmethionine:tRNA ribosyltransferase-isomerase from Erythrobacter litoralis (strain HTCC2594).